An 872-amino-acid chain; its full sequence is Facilitated trehalose transporter Tret1 (872 aa).

Disordered regions lie at residues 1-40 (MSGR…LKEK), 53-217 (VESN…KATS), 262-281 (SSSE…RKHQ), and 293-315 (KVLQ…KRLI). Residues 1-406 (MSGRDNRGAG…VYRPTTNPIY (406 aa)) lie on the Cytoplasmic side of the membrane. A compositionally biased stretch (gly residues) spans 8 to 22 (GAGGGGGGGGGGSGG). 3 stretches are compositionally biased toward low complexity: residues 55-68 (SNLS…SLDT), 84-98 (RHPQ…QQQR), and 121-132 (PPTQQQPQQQHQ). Phosphoserine is present on residues Ser262, Ser263, and Ser264. Ser334 and Ser336 each carry phosphoserine. The interval 340–361 (FLTSRQHFQQQRSISTDSRKSR) is disordered. Polar residues predominate over residues 344–355 (RQHFQQQRSIST). A helical transmembrane segment spans residues 407 to 427 (IWTQVLAALSVSLGSLVVGFV). Over 428–454 (SAYTSPALITMTNGNITSFEVTPQAAS) the chain is Extracellular. Asn442 carries N-linked (GlcNAc...) asparagine glycosylation. Residues 455–475 (WVGGIMPLAGLLGGIAGGPFI) form a helical membrane-spanning segment. The Cytoplasmic segment spans residues 476-488 (EYLGRRNTILTTA). A helical membrane pass occupies residues 489–509 (VPFIVSSLLIACAVNITMVLL). At 510 to 511 (GR) the chain is on the extracellular side. Residues 512-532 (FLAGFCVGIASLSLPVYLGET) traverse the membrane as a helical segment. The Cytoplasmic segment spans residues 533–538 (VQPEVR). A helical membrane pass occupies residues 539–559 (GTLGLLPTAFGNIGILLCFVA). The Extracellular portion of the chain corresponds to 560 to 566 (GTYMDWS). Residues 567–587 (MLAFLGAALPVPFLILMFLIP) form a helical membrane-spanning segment. The Cytoplasmic portion of the chain corresponds to 588–650 (ETPRWYVSRG…ELLKRNNLKP (63 aa)). Residues 651–671 (LSISLGLMFFQQLSGINAVIF) traverse the membrane as a helical segment. At 672–687 (YTVQIFKDAGSTIDGN) the chain is on the extracellular side. Residues 688–708 (VCTIIVGIVNFMATFIGIILI) traverse the membrane as a helical segment. At 709–714 (DRAGRK) the chain is on the cytoplasmic side. Residues 715-735 (ILLYVSNVAMIITLFVLGGFF) form a helical membrane-spanning segment. Over 736-755 (YCKDKAGIDVSNVGWLPLSC) the chain is Extracellular. Residues 756-776 (FVVYILGFSLGFGPIPWLMMG) traverse the membrane as a helical segment. At 777-784 (EILPAKIR) the chain is on the cytoplasmic side. The helical transmembrane segment at 785 to 803 (GSAASVATAFNWTCTFVVT) threads the bilayer. The Extracellular segment spans residues 804–816 (KTFQDMLDVIGSY). The chain crosses the membrane as a helical span at residues 817–837 (GAFWLFGAICFIGLFFVIIYV). The Cytoplasmic portion of the chain corresponds to 838–872 (PETQGKTLEDIERKMMGRVRRMSSVANIKPLSFNM). 2 positions are modified to phosphoserine: Ser860 and Ser861.

Belongs to the major facilitator superfamily. Sugar transporter (TC 2.A.1.1) family. Trehalose transporter subfamily.

The protein resides in the cell membrane. In terms of biological role, low-capacity facilitative transporter for trehalose. Does not transport maltose, sucrose or lactose. Mediates the bidirectional transfer of trehalose. Responsible for the transport of trehalose synthesized in the fat body and the incorporation of trehalose into other tissues that require a carbon source, thereby regulating trehalose levels in the hemolymph. This is Facilitated trehalose transporter Tret1 from Drosophila willistoni (Fruit fly).